We begin with the raw amino-acid sequence, 216 residues long: uncharacterized protein (216 aa).

The helical transmembrane segment at 5 to 25 (YVKALVAVTVALGVLLPSTIS) threads the bilayer. Composition is skewed to low complexity over residues 28–67 (KSFS…SSSS) and 89–108 (KASS…ATSK). The disordered stretch occupies residues 28 to 115 (KSFSGRSSSS…TSKVTGKTYS (88 aa)). The next 2 membrane-spanning stretches (helical) occupy residues 137–157 (GFAP…MFMI) and 183–203 (IAWI…IALI).

It is found in the cell membrane. This is an uncharacterized protein from Bacillus subtilis (strain 168).